The following is a 788-amino-acid chain: Integrin beta-6 (788 aa).

An N-terminal signal peptide occupies residues 1-21; sequence MGIELLCLFFLFLGRNDHVQG. Positions 22-71 constitute a PSI domain; the sequence is GCALGGAETCEDCLLIGPQCAWCSQENFTYLSGVGERCDTPANLLAKGCQ. At 22 to 709 the chain is on the extracellular side; sequence GCALGGAETC…KDCPKPPNSP (688 aa). 28 cysteine pairs are disulfide-bonded: C23–C41, C31–C454, C34–C59, C44–C70, C197–C204, C252–C293, C394–C406, C426–C452, C456–C476, C467–C479, C481–C490, C492–C519, C502–C517, C511–C522, C524–C537, C539–C560, C544–C558, C552–C563, C565–C574, C576–C599, C583–C597, C591–C602, C604–C614, C617–C620, C624–C670, C630–C649, C633–C645, and C678–C702. N-linked (GlcNAc...) asparagine glycosylation is found at N48 and N97. The 241-residue stretch at 131 to 371 folds into the VWFA domain; it reads YPVDLYYLMD…QLIISAYEEL (241 aa). Residues D140, S142, and S144 each contribute to the Mg(2+) site. Ca(2+) contacts are provided by S144, D147, D148, and E179. Ca(2+)-binding residues include N235, D237, P239, and E240. Mg(2+) is bound at residue E240. Residue N260 is glycosylated (N-linked (GlcNAc...) asparagine). Residues D271 and K355 each contribute to the Ca(2+) site. The N-linked (GlcNAc...) asparagine glycan is linked to N387. An N-linked (GlcNAc...) asparagine glycan is attached at N418. 4 I-EGF domains span residues 456-491, 492-538, 539-575, and 576-615; these read CQKE…PHCE, CGED…PYCQ, CDDF…EYCN, and CTTS…LTCE. N463 and N471 each carry an N-linked (GlcNAc...) asparagine glycan. The chain crosses the membrane as a helical span at residues 710-730; sequence MIMLGVSLAILLIGVVLLCIW. The tract at residues 731-758 is interaction with HAX1; sequence KLLVSFHDRKEVAKFEAERSKAKWQTGT. At 731-788 the chain is on the cytoplasmic side; that stretch reads KLLVSFHDRKEVAKFEAERSKAKWQTGTNPLYRGSTSTFKNVTYKHREKQKVDLSMDG.

It belongs to the integrin beta chain family. As to quaternary structure, heterodimer of an alpha and a beta subunit. Interacts with FLNB. Interacts with HAX1. ITGAV:ITGB6 interacts with FBN1. ITGAV:ITGB6 interacts with TGFB1.

It is found in the cell membrane. Its subcellular location is the cell junction. It localises to the focal adhesion. Its function is as follows. Integrin alpha-V:beta-6 (ITGAV:ITGB6) is a receptor for fibronectin and cytotactin. It recognizes the sequence R-G-D in its ligands. ITGAV:ITGB6 acts as a receptor for fibrillin-1 (FBN1) and mediates R-G-D-dependent cell adhesion to FBN1. Integrin alpha-V:beta-6 (ITGAV:ITGB6) mediates R-G-D-dependent release of transforming growth factor beta-1 (TGF-beta-1) from regulatory Latency-associated peptide (LAP), thereby playing a key role in TGF-beta-1 activation. The sequence is that of Integrin beta-6 (ITGB6) from Sus scrofa (Pig).